Consider the following 249-residue polypeptide: Putative [LysW]-aminoadipate/[LysW]-glutamate kinase (249 aa).

Substrate is bound by residues Arg63 and Asn166.

Belongs to the acetylglutamate kinase family. LysZ subfamily.

It is found in the cytoplasm. It carries out the reaction [amino-group carrier protein]-C-terminal-N-(1,4-dicarboxybutan-1-yl)-L-glutamine + ATP = [amino-group carrier protein]-C-terminal-N-(1-carboxy-5-phosphooxy-5-oxopentan-1-yl)-L-glutamine + ADP. It catalyses the reaction [amino-group carrier protein]-C-terminal-gamma-(L-glutamyl)-L-glutamate + ATP = [amino-group carrier protein]-C-terminal-gamma-(5-phospho-L-glutamyl)-L-glutamate + ADP. It participates in amino-acid biosynthesis; L-lysine biosynthesis via AAA pathway; L-lysine from L-alpha-aminoadipate (Thermus route): step 2/5. Its pathway is amino-acid biosynthesis; L-arginine biosynthesis. Involved in both the arginine and lysine biosynthetic pathways. Phosphorylates the LysW-bound precursors glutamate (for arginine biosynthesis), respectively alpha-aminoadipate (for lysine biosynthesis). This Pyrococcus furiosus (strain ATCC 43587 / DSM 3638 / JCM 8422 / Vc1) protein is Putative [LysW]-aminoadipate/[LysW]-glutamate kinase.